Here is a 400-residue protein sequence, read N- to C-terminus: Formate-dependent phosphoribosylglycinamide formyltransferase (400 aa).

N(1)-(5-phospho-beta-D-ribosyl)glycinamide contacts are provided by residues 22 to 23 (EL) and E82. ATP contacts are provided by residues R114, K155, 160-165 (SSGKGQ), 195-198 (EGFV), and E203. Positions 119–308 (RLAAEELGLS…EFALHARALL (190 aa)) constitute an ATP-grasp domain. The Mg(2+) site is built by E267 and E279. N(1)-(5-phospho-beta-D-ribosyl)glycinamide contacts are provided by residues D286, K356, and 363–364 (RR).

It belongs to the PurK/PurT family. Homodimer.

The catalysed reaction is N(1)-(5-phospho-beta-D-ribosyl)glycinamide + formate + ATP = N(2)-formyl-N(1)-(5-phospho-beta-D-ribosyl)glycinamide + ADP + phosphate + H(+). It participates in purine metabolism; IMP biosynthesis via de novo pathway; N(2)-formyl-N(1)-(5-phospho-D-ribosyl)glycinamide from N(1)-(5-phospho-D-ribosyl)glycinamide (formate route): step 1/1. Involved in the de novo purine biosynthesis. Catalyzes the transfer of formate to 5-phospho-ribosyl-glycinamide (GAR), producing 5-phospho-ribosyl-N-formylglycinamide (FGAR). Formate is provided by PurU via hydrolysis of 10-formyl-tetrahydrofolate. The chain is Formate-dependent phosphoribosylglycinamide formyltransferase from Hahella chejuensis (strain KCTC 2396).